The following is a 243-amino-acid chain: Urease accessory protein UreF (243 aa).

This sequence belongs to the UreF family. In terms of assembly, ureD, UreF and UreG form a complex that acts as a GTP-hydrolysis-dependent molecular chaperone, activating the urease apoprotein by helping to assemble the nickel containing metallocenter of UreC. The UreE protein probably delivers the nickel.

Its subcellular location is the cytoplasm. Functionally, required for maturation of urease via the functional incorporation of the urease nickel metallocenter. The polypeptide is Urease accessory protein UreF (Rhodopseudomonas palustris (strain BisB5)).